The sequence spans 351 residues: Dysbindin (351 aa).

A coiled-coil region spans residues 106–179; the sequence is FLADLECLTA…AELDAEHAQK (74 aa). The disordered stretch occupies residues 291 to 325; that stretch reads RHKLSSLSSTCTDSASQEASEGESPVVQSDEEEVQ. Low complexity predominate over residues 295-306; the sequence is SSLSSTCTDSAS.

Belongs to the dysbindin family. In terms of assembly, component of the biogenesis of lysosome-related organelles complex 1 (BLOC-1).

It localises to the cytoplasm. The protein localises to the cytoplasmic vesicle membrane. It is found in the cytoplasmic vesicle. The protein resides in the secretory vesicle. Its subcellular location is the synaptic vesicle membrane. It localises to the endosome membrane. The protein localises to the melanosome membrane. It is found in the nucleus. The protein resides in the postsynaptic density. Its subcellular location is the endoplasmic reticulum. In terms of biological role, component of the BLOC-1 complex, a complex that is required for normal biogenesis of lysosome-related organelles (LRO), such as platelet dense granules and melanosomes. Plays a role in intracellular vesicle trafficking. Plays a role in synaptic vesicle trafficking and in neurotransmitter release. May be required for normal dopamine homeostasis in the cerebral cortex, hippocampus, and hypothalamus. Plays a role in the regulation of cell surface exposure of DRD2. Contributes to the regulation of dopamine signaling. May play a role in actin cytoskeleton reorganization and neurite outgrowth. This chain is Dysbindin (DTNBP1), found in Gallus gallus (Chicken).